The following is a 218-amino-acid chain: RNA polymerase sigma-H factor (218 aa).

A Polymerase core binding motif is present at residues 62-75; that stretch reads DIVQEGMIGLYKSI. A DNA-binding region (H-T-H motif) is located at residues 182-201; sequence YQEISDELNRHVKSIDNALQ.

It belongs to the sigma-70 factor family. In terms of assembly, interacts transiently with the RNAP core.

Its function is as follows. Sigma factors are initiation factors that promote the attachment of RNA polymerase (RNAP) to specific initiation sites and are then released. This sigma factor is involved in the transition to post-exponential phase in the beginning of sporulation. It is also required for transcription of several stationary phase genes. Association with the RNAP core increases rapidly in early exponential phase, and reamins constant expression level after. This is RNA polymerase sigma-H factor (sigH) from Bacillus subtilis (strain 168).